Here is a 274-residue protein sequence, read N- to C-terminus: Dermonecrotic toxin SdSicTox-betaIIB1ai (274 aa).

H5 is a catalytic residue. Residues E25 and D27 each coordinate Mg(2+). H41 acts as the Nucleophile in catalysis. 2 cysteine pairs are disulfide-bonded: C45-C51 and C47-C190. D85 is a Mg(2+) binding site.

The protein belongs to the arthropod phospholipase D family. Class II subfamily. It depends on Mg(2+) as a cofactor. As to expression, expressed by the venom gland.

The protein resides in the secreted. The catalysed reaction is an N-(acyl)-sphingosylphosphocholine = an N-(acyl)-sphingosyl-1,3-cyclic phosphate + choline. It carries out the reaction an N-(acyl)-sphingosylphosphoethanolamine = an N-(acyl)-sphingosyl-1,3-cyclic phosphate + ethanolamine. The enzyme catalyses a 1-acyl-sn-glycero-3-phosphocholine = a 1-acyl-sn-glycero-2,3-cyclic phosphate + choline. It catalyses the reaction a 1-acyl-sn-glycero-3-phosphoethanolamine = a 1-acyl-sn-glycero-2,3-cyclic phosphate + ethanolamine. Functionally, dermonecrotic toxins cleave the phosphodiester linkage between the phosphate and headgroup of certain phospholipids (sphingolipid and lysolipid substrates), forming an alcohol (often choline) and a cyclic phosphate. This toxin acts on sphingomyelin (SM). It may also act on ceramide phosphoethanolamine (CPE), lysophosphatidylcholine (LPC) and lysophosphatidylethanolamine (LPE), but not on lysophosphatidylserine (LPS), and lysophosphatidylglycerol (LPG). It acts by transphosphatidylation, releasing exclusively cyclic phosphate products as second products. Induces dermonecrosis, hemolysis, increased vascular permeability, edema, inflammatory response, and platelet aggregation. This is Dermonecrotic toxin SdSicTox-betaIIB1ai from Sicarius cf. damarensis (strain GJB-2008) (Six-eyed sand spider).